Reading from the N-terminus, the 2059-residue chain is Non-reducing polyketide synthase stmB (2059 aa).

A Starter acyltransferase (SAT) domain is found at 7-243; that stretch reads LLFGDQTVEL…LKLAAYGAVH (237 aa). Residues 366 to 796 form the Ketosynthase family 3 (KS3) domain; that stretch reads SNSIAIVGMA…GGNSCLILEE (431 aa). Active-site for beta-ketoacyl synthase activity residues include cysteine 538, histidine 673, and histidine 713. The Malonyl-CoA:ACP transacylase (MAT) domain occupies 895–1185; that stretch reads WVFSGQGSQY…CGSMVKATLG (291 aa). The interval 1273–1413 is N-terminal hotdog fold; the sequence is LHFVKKETVT…SASEWTDEWS (141 aa). One can recognise a PKS/mFAS DH domain in the interval 1273–1581; the sequence is LHFVKKETVT…FQRMPRMVLH (309 aa). The active-site Proton acceptor; for dehydratase activity is the histidine 1306. Positions 1435-1581 are C-terminal hotdog fold; it reads GDHLRRPVVY…FQRMPRMVLH (147 aa). Aspartate 1495 functions as the Proton donor; for dehydratase activity in the catalytic mechanism. Residues 1619-1696 enclose the Carrier domain; that stretch reads PPKHDLADQL…DARRALGGDE (78 aa). Serine 1656 is subject to O-(pantetheine 4'-phosphoryl)serine. Residues 1693–1727 form a disordered region; the sequence is GGDETASESENDAEGDAPSDGGSPSGSWTPISPPE. The segment covering 1697 to 1709 has biased composition (acidic residues); it reads TASESENDAEGDA. Over residues 1710–1719 the composition is skewed to low complexity; the sequence is PSDGGSPSGS. The thioesterase (TE) domain stretch occupies residues 1778–2059; it reads AVEYKSNVVL…LGKLLQEAVA (282 aa).

Pantetheine 4'-phosphate serves as cofactor.

Its pathway is mycotoxin biosynthesis. Non-reducing polyketide synthase; part of the gene cluster that mediates the biosynthesis of stromemycin, a depside C-glucoside with two unsaturated C9 side chains belonging to aromatic polyketide glycosides. The HR-PKS stmA and the NR-PKS stmB act as scaffold-generating enzymes responsible for the biosynthesis of the polyketide skeleton bininalkenylresorcylic acid. StmA condenses on acetyl-CoA starter unit with 4 malonyl-CoA units and the stmB uses 3 more malonyl-CoA units and catalyzes the depside bond formation. The glycoytransferase stmC then acts as the tailoring enzyme responsible for 3-C-glucosylation of bininalkenylresorcylic acid to yield stromemycin. The protein is Non-reducing polyketide synthase stmB of Aspergillus ustus.